Reading from the N-terminus, the 377-residue chain is Erythronate-4-phosphate dehydrogenase (377 aa).

Substrate is bound by residues Ser45 and Thr66. Positions 146 and 175 each coordinate NAD(+). Arg208 is a catalytic residue. Position 232 (Asp232) interacts with NAD(+). The active site involves Glu237. The active-site Proton donor is the His254. Position 257 (Gly257) interacts with NAD(+). Substrate is bound at residue Tyr258.

The protein belongs to the D-isomer specific 2-hydroxyacid dehydrogenase family. PdxB subfamily. Homodimer.

It is found in the cytoplasm. The enzyme catalyses 4-phospho-D-erythronate + NAD(+) = (R)-3-hydroxy-2-oxo-4-phosphooxybutanoate + NADH + H(+). The protein operates within cofactor biosynthesis; pyridoxine 5'-phosphate biosynthesis; pyridoxine 5'-phosphate from D-erythrose 4-phosphate: step 2/5. Catalyzes the oxidation of erythronate-4-phosphate to 3-hydroxy-2-oxo-4-phosphonooxybutanoate. This is Erythronate-4-phosphate dehydrogenase from Sodalis glossinidius (strain morsitans).